The following is a 158-amino-acid chain: 2-C-methyl-D-erythritol 2,4-cyclodiphosphate synthase (158 aa).

Positions 9 and 11 each coordinate a divalent metal cation. Residues Asp9–His11 and His35–Ser36 contribute to the 4-CDP-2-C-methyl-D-erythritol 2-phosphate site. His43 contributes to the a divalent metal cation binding site. 4-CDP-2-C-methyl-D-erythritol 2-phosphate is bound by residues Asp57 to Gly59, Phe62 to Asp66, Thr133 to Glu136, Phe140, and Arg143.

Belongs to the IspF family. In terms of assembly, homotrimer. A divalent metal cation serves as cofactor.

It catalyses the reaction 4-CDP-2-C-methyl-D-erythritol 2-phosphate = 2-C-methyl-D-erythritol 2,4-cyclic diphosphate + CMP. It participates in isoprenoid biosynthesis; isopentenyl diphosphate biosynthesis via DXP pathway; isopentenyl diphosphate from 1-deoxy-D-xylulose 5-phosphate: step 4/6. Involved in the biosynthesis of isopentenyl diphosphate (IPP) and dimethylallyl diphosphate (DMAPP), two major building blocks of isoprenoid compounds. Catalyzes the conversion of 4-diphosphocytidyl-2-C-methyl-D-erythritol 2-phosphate (CDP-ME2P) to 2-C-methyl-D-erythritol 2,4-cyclodiphosphate (ME-CPP) with a corresponding release of cytidine 5-monophosphate (CMP). This Actinobacillus pleuropneumoniae serotype 7 (strain AP76) protein is 2-C-methyl-D-erythritol 2,4-cyclodiphosphate synthase.